A 215-amino-acid polypeptide reads, in one-letter code: Late embryogenesis abundant protein 14 (215 aa).

2 disordered regions span residues 1–129 (MASQ…GQTG) and 190–215 (SGDN…SDYQ). 4 stretches are compositionally biased toward basic and acidic residues: residues 13–24 (GETKARAEEKTG), 32–41 (EKAREAKDTA), 54–81 (GAKE…KDAA), and 88–111 (AMDK…DRAA). Residues 192–215 (DNKNNAAAGKDTSTYKPGTGSDYQ) are compositionally biased toward polar residues.

It belongs to the LEA type 4 family. In terms of tissue distribution, expressed in the shoot apex and leaves. Expressed in dry seeds. Expressed in roots and leaves.

It is found in the nucleus. This Oryza sativa subsp. japonica (Rice) protein is Late embryogenesis abundant protein 14.